The following is a 184-amino-acid chain: Protein GrpE (184 aa).

The disordered stretch occupies residues 1-32 (MEEQKQTPSTPTPDTAAEAAVNAATAAPETAG). The segment covering 12–32 (TPDTAAEAAVNAATAAPETAG) has biased composition (low complexity).

It belongs to the GrpE family. In terms of assembly, homodimer.

Its subcellular location is the cytoplasm. Participates actively in the response to hyperosmotic and heat shock by preventing the aggregation of stress-denatured proteins, in association with DnaK and GrpE. It is the nucleotide exchange factor for DnaK and may function as a thermosensor. Unfolded proteins bind initially to DnaJ; upon interaction with the DnaJ-bound protein, DnaK hydrolyzes its bound ATP, resulting in the formation of a stable complex. GrpE releases ADP from DnaK; ATP binding to DnaK triggers the release of the substrate protein, thus completing the reaction cycle. Several rounds of ATP-dependent interactions between DnaJ, DnaK and GrpE are required for fully efficient folding. This chain is Protein GrpE, found in Cupriavidus pinatubonensis (strain JMP 134 / LMG 1197) (Cupriavidus necator (strain JMP 134)).